The chain runs to 357 residues: Thiamine thiazole synthase, chloroplastic (357 aa).

Substrate is bound by residues Ala-102, 123-124 (EQ), Gly-131, and Val-196. Cys-233 bears the 2,3-didehydroalanine (Cys) mark. Substrate-binding positions include Asp-235, His-250, Met-304, and 314–316 (RMG).

Belongs to the THI4 family. In terms of assembly, homooctamer. Fe cation is required as a cofactor. Post-translationally, during the catalytic reaction, a sulfide is transferred from Cys-233 to a reaction intermediate, generating a dehydroalanine residue.

The protein localises to the plastid. The protein resides in the chloroplast. It catalyses the reaction [ADP-thiazole synthase]-L-cysteine + glycine + NAD(+) = [ADP-thiazole synthase]-dehydroalanine + ADP-5-ethyl-4-methylthiazole-2-carboxylate + nicotinamide + 3 H2O + 2 H(+). Functionally, involved in biosynthesis of the thiamine precursor thiazole. Catalyzes the conversion of NAD and glycine to adenosine diphosphate 5-(2-hydroxyethyl)-4-methylthiazole-2-carboxylic acid (ADT), an adenylated thiazole intermediate. The reaction includes an iron-dependent sulfide transfer from a conserved cysteine residue of the protein to a thiazole intermediate. The enzyme can only undergo a single turnover, which suggests it is a suicide enzyme. May have additional roles in adaptation to various stress conditions and in DNA damage tolerance. This is Thiamine thiazole synthase, chloroplastic from Chlamydomonas reinhardtii (Chlamydomonas smithii).